Reading from the N-terminus, the 180-residue chain is Inner membrane-spanning protein YciB (180 aa).

6 helical membrane-spanning segments follow: residues 4–24 (FLSE…GGGI), 25–45 (QHAT…CYVI), 49–69 (VSKL…ITLI), 76–96 (IKIK…MSGI), 118–138 (ITLS…NEVV), and 150–170 (FKVF…LPLL).

The protein belongs to the YciB family.

The protein resides in the cell inner membrane. Plays a role in cell envelope biogenesis, maintenance of cell envelope integrity and membrane homeostasis. This Rickettsia rickettsii (strain Iowa) protein is Inner membrane-spanning protein YciB.